We begin with the raw amino-acid sequence, 434 residues long: Alpha-enolase (434 aa).

Residue Ser40 coordinates Mg(2+). Residues His158 and Glu167 each coordinate substrate. The active-site Proton donor is Glu210. Mg(2+) contacts are provided by Asp245, Glu293, and Asp318. Substrate-binding residues include Glu293 and Asp318. Lys343 serves as the catalytic Proton acceptor. Residues 370–373 (SHRS) and Lys394 contribute to the substrate site.

Belongs to the enolase family. In terms of assembly, homodimer. It depends on Mg(2+) as a cofactor.

It localises to the cytoplasm. It carries out the reaction (2R)-2-phosphoglycerate = phosphoenolpyruvate + H2O. It participates in carbohydrate degradation; glycolysis; pyruvate from D-glyceraldehyde 3-phosphate: step 4/5. The chain is Alpha-enolase from Alligator mississippiensis (American alligator).